The primary structure comprises 543 residues: Carboxypeptidase Y homolog A (543 aa).

An N-terminal signal peptide occupies residues Met-1–Ala-17. Residues Gln-18 to Lys-124 constitute a propeptide that is removed on maturation. Intrachain disulfides connect Cys-179-Cys-419, Cys-313-Cys-327, Cys-337-Cys-360, Cys-344-Cys-353, and Cys-382-Cys-389. Asn-210 carries an N-linked (GlcNAc...) asparagine glycan. Ser-266 is an active-site residue. The active site involves Asp-458. Asn-509 carries an N-linked (GlcNAc...) asparagine glycan. Residue His-520 is part of the active site.

The protein belongs to the peptidase S10 family.

Its subcellular location is the vacuole. It catalyses the reaction Release of a C-terminal amino acid with broad specificity.. Its function is as follows. Vacuolar carboxypeptidase involved in degradation of small peptides. Digests preferentially peptides containing an aliphatic or hydrophobic residue in P1' position, as well as methionine, leucine or phenylalanine in P1 position of ester substrate. This is Carboxypeptidase Y homolog A (cpyA) from Trichophyton verrucosum (strain HKI 0517).